Here is a 279-residue protein sequence, read N- to C-terminus: Pantothenate synthetase (279 aa).

Residue 26–33 (MGNLHDGH) participates in ATP binding. Catalysis depends on His-33, which acts as the Proton donor. Position 57 (Gln-57) interacts with (R)-pantoate. Gln-57 is a binding site for beta-alanine. 144-147 (GKKD) is an ATP binding site. Residue Gln-150 coordinates (R)-pantoate. ATP contacts are provided by residues Val-173 and 181–184 (LSSR).

This sequence belongs to the pantothenate synthetase family. As to quaternary structure, homodimer.

It localises to the cytoplasm. The enzyme catalyses (R)-pantoate + beta-alanine + ATP = (R)-pantothenate + AMP + diphosphate + H(+). Its pathway is cofactor biosynthesis; (R)-pantothenate biosynthesis; (R)-pantothenate from (R)-pantoate and beta-alanine: step 1/1. Catalyzes the condensation of pantoate with beta-alanine in an ATP-dependent reaction via a pantoyl-adenylate intermediate. The chain is Pantothenate synthetase from Burkholderia mallei (strain NCTC 10229).